Consider the following 169-residue polypeptide: MQSLQQKASEWSGVSTDEAFSIDETNLFQKLGLQTFINLSTNFYNRVYDDEEEEWFRSIFANSKKEEAIQNQYEFFVQRMGGPPLFSQRRGHPALIGRHQPFPVTHQAAERWLHHMQLALDTTPDIDDDSKIKMMNFFRHTAYFLVAGDELKNPNQQIPCKHAAGKDNS.

A heme b-binding site is contributed by histidine 99.

It belongs to the truncated hemoglobin family. Group II subfamily. Homodimer when ferric.

In terms of biological role, hemoglobin-like protein that exhibits an unusual concentration-independent binding of O(2) and CO. Required for general plant development and during nodulation. May promote shoot organogenesis from root explants. The sequence is that of Group 2 truncated hemoglobin 3-2 from Medicago truncatula (Barrel medic).